A 158-amino-acid chain; its full sequence is Transcription factor BTF3 homolog 4 (158 aa).

The 66-residue stretch at 33-98 (TADDKKLQSS…AEVKQITEML (66 aa)) folds into the NAC-A/B domain. The interval 123 to 158 (QVLDSKASKPEDIEEEDDDVPELVGNFDEASKNEAN) is disordered. The span at 134-143 (DIEEEDDDVP) shows a compositional bias: acidic residues.

This sequence belongs to the NAC-beta family.

In Xenopus laevis (African clawed frog), this protein is Transcription factor BTF3 homolog 4 (btf3l4).